The chain runs to 320 residues: MSNARPQAGEKLRDDEKVKHIPITIMPTEKAEMLRKPEWIKIRLPRTTDRIDHIKKTLRKNNLHSVCEEASCPNLAECFNHGTATFMILGDICTRRCPFCDVAHGKPLPPSAEEPVKLAKTIAEMQLKYVVITSVDRDDLRDGGAQHFVDCINAIREHSPTTKIEVLVPDFRGRMDKALEILKNGVPDVFNHNLETIPRLYRECRPGANYQWSLDLLKKFKEQHPDIPTKSGLMMGMGENKEEIAEVLKDLRAHNVEMLTLGQYLQPSKHHFPLKRYVHPTEFDELGVIAKEIGFTHAACGPMVRSSYHADKQAAGVEVK.

7 residues coordinate [4Fe-4S] cluster: Cys-67, Cys-72, Cys-78, Cys-93, Cys-97, Cys-100, and Ser-307. The Radical SAM core domain occupies 79-296 (FNHGTATFMI…GVIAKEIGFT (218 aa)).

Belongs to the radical SAM superfamily. Lipoyl synthase family. [4Fe-4S] cluster is required as a cofactor.

It is found in the cytoplasm. The enzyme catalyses [[Fe-S] cluster scaffold protein carrying a second [4Fe-4S](2+) cluster] + N(6)-octanoyl-L-lysyl-[protein] + 2 oxidized [2Fe-2S]-[ferredoxin] + 2 S-adenosyl-L-methionine + 4 H(+) = [[Fe-S] cluster scaffold protein] + N(6)-[(R)-dihydrolipoyl]-L-lysyl-[protein] + 4 Fe(3+) + 2 hydrogen sulfide + 2 5'-deoxyadenosine + 2 L-methionine + 2 reduced [2Fe-2S]-[ferredoxin]. Its pathway is protein modification; protein lipoylation via endogenous pathway; protein N(6)-(lipoyl)lysine from octanoyl-[acyl-carrier-protein]: step 2/2. Its function is as follows. Catalyzes the radical-mediated insertion of two sulfur atoms into the C-6 and C-8 positions of the octanoyl moiety bound to the lipoyl domains of lipoate-dependent enzymes, thereby converting the octanoylated domains into lipoylated derivatives. In Pseudoalteromonas atlantica (strain T6c / ATCC BAA-1087), this protein is Lipoyl synthase.